The following is a 451-amino-acid chain: Eukaryotic translation initiation factor 3 subunit E (451 aa).

A PCI domain is found at 256–425 (TDLFFSPAYI…GTVIMNHPPQ (170 aa)).

This sequence belongs to the eIF-3 subunit E family. Component of the eukaryotic translation initiation factor 3 (eIF-3) complex.

It is found in the cytoplasm. Functionally, component of the eukaryotic translation initiation factor 3 (eIF-3) complex, which is involved in protein synthesis of a specialized repertoire of mRNAs and, together with other initiation factors, stimulates binding of mRNA and methionyl-tRNAi to the 40S ribosome. The eIF-3 complex specifically targets and initiates translation of a subset of mRNAs involved in cell proliferation. The sequence is that of Eukaryotic translation initiation factor 3 subunit E (int6) from Aspergillus oryzae (strain ATCC 42149 / RIB 40) (Yellow koji mold).